A 1375-amino-acid chain; its full sequence is DNA-directed RNA polymerase subunit beta (1375 aa).

This sequence belongs to the RNA polymerase beta chain family. As to quaternary structure, the RNAP catalytic core consists of 2 alpha, 1 beta, 1 beta' and 1 omega subunit. When a sigma factor is associated with the core the holoenzyme is formed, which can initiate transcription.

It catalyses the reaction RNA(n) + a ribonucleoside 5'-triphosphate = RNA(n+1) + diphosphate. In terms of biological role, DNA-dependent RNA polymerase catalyzes the transcription of DNA into RNA using the four ribonucleoside triphosphates as substrates. This Methylorubrum populi (strain ATCC BAA-705 / NCIMB 13946 / BJ001) (Methylobacterium populi) protein is DNA-directed RNA polymerase subunit beta.